The chain runs to 471 residues: tRNA-2-methylthio-N(6)-dimethylallyladenosine synthase (471 aa).

Residues 33–151 (KKYMITTYGC…FPELLSRSME (119 aa)) enclose the MTTase N-terminal domain. Residues C42, C78, C112, C188, C192, and C195 each contribute to the [4Fe-4S] cluster site. One can recognise a Radical SAM core domain in the interval 174–404 (RKYDLKGFIN…LDKVNEISAE (231 aa)). One can recognise a TRAM domain in the interval 407 to 470 (QSYLNKVVEV…TFSLNGEVIQ (64 aa)).

The protein belongs to the methylthiotransferase family. MiaB subfamily. As to quaternary structure, monomer. It depends on [4Fe-4S] cluster as a cofactor.

The protein resides in the cytoplasm. It catalyses the reaction N(6)-dimethylallyladenosine(37) in tRNA + (sulfur carrier)-SH + AH2 + 2 S-adenosyl-L-methionine = 2-methylsulfanyl-N(6)-dimethylallyladenosine(37) in tRNA + (sulfur carrier)-H + 5'-deoxyadenosine + L-methionine + A + S-adenosyl-L-homocysteine + 2 H(+). In terms of biological role, catalyzes the methylthiolation of N6-(dimethylallyl)adenosine (i(6)A), leading to the formation of 2-methylthio-N6-(dimethylallyl)adenosine (ms(2)i(6)A) at position 37 in tRNAs that read codons beginning with uridine. In Alkaliphilus oremlandii (strain OhILAs) (Clostridium oremlandii (strain OhILAs)), this protein is tRNA-2-methylthio-N(6)-dimethylallyladenosine synthase.